A 101-amino-acid chain; its full sequence is Urease subunit gamma (101 aa).

Belongs to the urease gamma subunit family. In terms of assembly, heterotrimer of UreA (gamma), UreB (beta) and UreC (alpha) subunits. Three heterotrimers associate to form the active enzyme.

Its subcellular location is the cytoplasm. The catalysed reaction is urea + 2 H2O + H(+) = hydrogencarbonate + 2 NH4(+). It participates in nitrogen metabolism; urea degradation; CO(2) and NH(3) from urea (urease route): step 1/1. The chain is Urease subunit gamma from Corynebacterium kroppenstedtii (strain DSM 44385 / JCM 11950 / CIP 105744 / CCUG 35717).